A 432-amino-acid chain; its full sequence is 3-phosphoshikimate 1-carboxyvinyltransferase (432 aa).

Residues lysine 23, serine 24, and arginine 28 each coordinate 3-phosphoshikimate. Lysine 23 is a binding site for phosphoenolpyruvate. The phosphoenolpyruvate site is built by glycine 95 and arginine 123. Serine 167, glutamine 169, aspartate 317, and lysine 344 together coordinate 3-phosphoshikimate. Phosphoenolpyruvate is bound at residue glutamine 169. Aspartate 317 acts as the Proton acceptor in catalysis. Residues arginine 348 and arginine 390 each coordinate phosphoenolpyruvate.

This sequence belongs to the EPSP synthase family. As to quaternary structure, monomer.

Its subcellular location is the cytoplasm. The enzyme catalyses 3-phosphoshikimate + phosphoenolpyruvate = 5-O-(1-carboxyvinyl)-3-phosphoshikimate + phosphate. It participates in metabolic intermediate biosynthesis; chorismate biosynthesis; chorismate from D-erythrose 4-phosphate and phosphoenolpyruvate: step 6/7. Catalyzes the transfer of the enolpyruvyl moiety of phosphoenolpyruvate (PEP) to the 5-hydroxyl of shikimate-3-phosphate (S3P) to produce enolpyruvyl shikimate-3-phosphate and inorganic phosphate. In Staphylococcus saprophyticus subsp. saprophyticus (strain ATCC 15305 / DSM 20229 / NCIMB 8711 / NCTC 7292 / S-41), this protein is 3-phosphoshikimate 1-carboxyvinyltransferase.